A 596-amino-acid polypeptide reads, in one-letter code: Fructan 1-exohydrolase w2 (596 aa).

A signal peptide spans Met-1–Ser-20. Asp-75 is a catalytic residue. Asn-168, Asn-236, and Asn-248 each carry an N-linked (GlcNAc...) asparagine glycan. A disulfide bridge links Cys-446 with Cys-492. A glycan (N-linked (GlcNAc...) asparagine) is linked at Asn-567.

This sequence belongs to the glycosyl hydrolase 32 family.

The catalysed reaction is Hydrolysis of terminal, non-reducing (2-&gt;1)-linked beta-D-fructofuranose residues in fructans.. Its activity is regulated as follows. Inhibited by sucrose. Hydrolyzes inulin-type beta-(2,1)-fructans, but not beta-(2,1)-linkages in branched fructans. Has low activity against beta-(2,6)-linked fructans. May play a role as a beta-(2,1)-trimmer during graminan biosynthesis. The protein is Fructan 1-exohydrolase w2 of Triticum aestivum (Wheat).